Reading from the N-terminus, the 95-residue chain is UPF0235 protein Sama_2480 (95 aa).

It belongs to the UPF0235 family.

The chain is UPF0235 protein Sama_2480 from Shewanella amazonensis (strain ATCC BAA-1098 / SB2B).